We begin with the raw amino-acid sequence, 79 residues long: Cytochrome c-551 (79 aa).

The span at 1 to 14 shows a compositional bias: polar residues; sequence DGQSIYESGTSPTC. The disordered stretch occupies residues 1 to 35; it reads DGQSIYESGTSPTCASCHDRGTAGAPKINEPGDWD. Heme c is bound by residues Cys-14, Cys-17, His-18, and Met-55.

Binds 1 heme c group covalently per subunit.

The sequence is that of Cytochrome c-551 from Halorhodospira halochloris (Ectothiorhodospira halochloris).